A 1092-amino-acid polypeptide reads, in one-letter code: Probable arabinosyltransferase A (1092 aa).

13 helical membrane passes run 21–43 (IARL…VPLL), 214–233 (AVMV…LALL), 249–271 (GLWT…IVGA), 324–346 (VWMR…RCVL), 353–372 (VAAN…AAWL), 382–399 (PLIA…ENSI), 404–426 (LWPA…QGLI), 517–534 (FAVL…MVLL), 541–563 (GAVS…LLIL), 568–590 (WAIQ…AFAF), 602–624 (ALYV…GWFY), 639–661 (IAHY…LAGW), and 682–704 (ALAS…GSMV). The disordered stretch occupies residues 772–798 (PSGVSEHLEPEPVGTNPGTPNSEGPVD).

It belongs to the emb family.

It is found in the cell membrane. Functionally, arabinosyl transferase responsible for the polymerization of arabinose into the arabinan of arabinogalactan. The polypeptide is Probable arabinosyltransferase A (embA) (Mycolicibacterium smegmatis (Mycobacterium smegmatis)).